The chain runs to 283 residues: Acetylglutamate kinase (283 aa).

Substrate is bound by residues glycine 63–glycine 64, arginine 85, and asparagine 178.

It belongs to the acetylglutamate kinase family. ArgB subfamily.

The protein localises to the cytoplasm. It catalyses the reaction N-acetyl-L-glutamate + ATP = N-acetyl-L-glutamyl 5-phosphate + ADP. It functions in the pathway amino-acid biosynthesis; L-arginine biosynthesis; N(2)-acetyl-L-ornithine from L-glutamate: step 2/4. In terms of biological role, catalyzes the ATP-dependent phosphorylation of N-acetyl-L-glutamate. This chain is Acetylglutamate kinase, found in Prochlorococcus marinus (strain MIT 9515).